The sequence spans 236 residues: MKLNISYPVNGTQKTIEVDDEHRVRVFYDKRIGQEVNGEAVGDEFKGYVFKIAGGNDKQGFPMKQGVLLPTRVKLLMAKGTSCYRPRRNGERKRKSVRGAIVGPDLAVLALIITKKGDQEIEGITNESVPKRLGPKRANNIRKFFGLTKDDDVRDFVIRREVVKGDKTYTKAPKIQRLVTPQRLQRKRHQRALKVRNAQAQREAAAEYAQLLAKRLTEKKAEKAEERKRRASSLKA.

Residues serine 232 and serine 233 each carry the phosphoserine modification.

It belongs to the eukaryotic ribosomal protein eS6 family. In terms of processing, phosphorylated.

The chain is Small ribosomal subunit protein eS6 (RPS6) from Eremothecium gossypii (strain ATCC 10895 / CBS 109.51 / FGSC 9923 / NRRL Y-1056) (Yeast).